The sequence spans 132 residues: CLAVATA3/ESR (CLE)-related protein TDIF (132 aa).

Residues 1-26 form the signal peptide; that stretch reads MDIDLLWSFGGWFFILFPETINYCMA. Residues 42–62 form a helical membrane-spanning segment; sequence SCSSLFFVALLIITILITMLQ. Over residues 68–77 the composition is skewed to polar residues; the sequence is EVTSLPTHQP. Residues 68–132 are disordered; it reads EVTSLPTHQP…PSGPNPISNR (65 aa). The segment covering 87-96 has biased composition (low complexity); the sequence is STSSTATTTT. Residues 101–111 show a composition bias toward basic residues; the sequence is KRTHHQSHPKP. Hydroxyproline is present on residues proline 123 and proline 126. The O-linked (Ara...) hydroxyproline glycan is linked to proline 126.

This sequence belongs to the CLV3/ESR signal peptide family. In terms of assembly, interacts specifically with the leucine-rich repeat receptor-like protein kinase TDR. In terms of processing, the TDIFp peptide contains two hydroxprolines, but hydroxylation had no direct effect on TDIFp activity. The O-glycosylation (arabinosylation) of the hydroxyproline Pro-126 enhances binding affinity of the TDIFp peptide for its receptor.

It localises to the secreted. The protein localises to the extracellular space. It is found in the cell membrane. Functionally, extracellular signal peptide that regulates cell fate. Represses tracheary element differentiation but promotes the formation of procambial cells adjacent to phloem cells in the veins. This is CLAVATA3/ESR (CLE)-related protein TDIF from Zinnia elegans (Garden zinnia).